The sequence spans 127 residues: Fluoride-specific ion channel FluC (127 aa).

A run of 4 helical transmembrane segments spans residues 4–24 (TLLA…QLGV), 35–55 (LGTL…LAFF), 71–91 (TGLC…IMFL), and 103–123 (VLLN…LVTW). G75 and T78 together coordinate Na(+).

This sequence belongs to the fluoride channel Fluc/FEX (TC 1.A.43) family.

It is found in the cell inner membrane. The enzyme catalyses fluoride(in) = fluoride(out). Na(+) is not transported, but it plays an essential structural role and its presence is essential for fluoride channel function. In terms of biological role, fluoride-specific ion channel. Important for reducing fluoride concentration in the cell, thus reducing its toxicity. The chain is Fluoride-specific ion channel FluC from Pectobacterium carotovorum subsp. carotovorum (strain PC1).